We begin with the raw amino-acid sequence, 83 residues long: Small ribosomal subunit protein bS16 (83 aa).

This sequence belongs to the bacterial ribosomal protein bS16 family.

The polypeptide is Small ribosomal subunit protein bS16 (Aromatoleum aromaticum (strain DSM 19018 / LMG 30748 / EbN1) (Azoarcus sp. (strain EbN1))).